The chain runs to 184 residues: Probable cobalt-precorrin-6B C(15)-methyltransferase (decarboxylating) (184 aa).

Residues Thr12, 36–40 (GCGTG), Asp59, and Ala87 contribute to the S-adenosyl-L-methionine site.

The protein belongs to the methyltransferase superfamily. Archaeal-type CbiT family.

The catalysed reaction is Co-precorrin-6B + S-adenosyl-L-methionine = Co-precorrin-7 + S-adenosyl-L-homocysteine + CO2. Its pathway is cofactor biosynthesis; adenosylcobalamin biosynthesis; cob(II)yrinate a,c-diamide from sirohydrochlorin (anaerobic route): step 8/10. In terms of biological role, catalyzes the methylation of C-15 in cobalt-precorrin-6B followed by the decarboxylation of C-12 to form cobalt-precorrin-7. The sequence is that of Probable cobalt-precorrin-6B C(15)-methyltransferase (decarboxylating) from Methanosarcina acetivorans (strain ATCC 35395 / DSM 2834 / JCM 12185 / C2A).